The following is a 177-amino-acid chain: Translation initiation factor IF-3 (177 aa).

It belongs to the IF-3 family. In terms of assembly, monomer.

The protein localises to the cytoplasm. IF-3 binds to the 30S ribosomal subunit and shifts the equilibrium between 70S ribosomes and their 50S and 30S subunits in favor of the free subunits, thus enhancing the availability of 30S subunits on which protein synthesis initiation begins. This Nitratiruptor sp. (strain SB155-2) protein is Translation initiation factor IF-3.